Reading from the N-terminus, the 157-residue chain is Class I hydrophobin rodA (157 aa).

Residues 1 to 41 (MKFSIAAAVVAFAASVAALPPAHDSQFAGNGVGNKGNSNVK) form the signal peptide. The N-linked (GlcNAc...) asparagine glycan is linked to N47. 4 disulfides stabilise this stretch: C57/C131, C65/C125, C66/C106, and C132/C150.

This sequence belongs to the fungal hydrophobin family. In terms of assembly, self-assembles to form functional amyloid fibrils called rodlets. Self-assembly into fibrillar rodlets occurs spontaneously at hydrophobic:hydrophilic interfaces and the rodlets further associate laterally to form amphipathic monolayers.

It is found in the secreted. The protein localises to the spore wall. In terms of biological role, aerial growth, conidiation, and dispersal of filamentous fungi in the environment rely upon a capability of their secreting small amphipathic proteins called hydrophobins (HPBs) with low sequence identity. Class I can self-assemble into an outermost layer of rodlet bundles on aerial cell surfaces, conferring cellular hydrophobicity that supports fungal growth, development and dispersal; whereas Class II form highly ordered films at water-air interfaces through intermolecular interactions but contribute nothing to the rodlet structure. RodA is a class I hydrophobin that contributes to surface hydrophobicity, which is important for processes such as association of hyphae in reproductive structures, dispersal of aerial spores and adhesion of pathogens to host structures. Important for the formation of hydrophobic rodlet layers of asexually-produced spores. Promotes also biofilm formation and may enhance lignocellulose utilization via promoting a compact substrate-enzyme-fungus structure. The chain is Class I hydrophobin rodA from Emericella nidulans (strain FGSC A4 / ATCC 38163 / CBS 112.46 / NRRL 194 / M139) (Aspergillus nidulans).